The following is a 503-amino-acid chain: Na(+)-translocating NADH-quinone reductase subunit B (503 aa).

4 helical membrane-spanning segments follow: residues 55–75 (MMLVVIALFPATFLAIWNSGI), 120–140 (IFLPLLIISYTVGGACEVLFA), 161–181 (TLPPTIPYWMAALGIAFGVVV), and 186–206 (FGGTGMNILNPALSGRAFLFF). Threonine 248 bears the FMN phosphoryl threonine mark. 5 consecutive transmembrane segments (helical) span residues 361-381 (TSTFACLLGAVFLVITGIASW), 387-407 (FGIGAFVTAWLFKICSILIAG), 417-437 (FFIPAYRQLFLGGLAFGLVFM), 452-472 (WIYGLFIGFMTIIIRLINPAY), and 475-495 (GVMLAILLGNVFAPLLDYFAV).

It belongs to the NqrB/RnfD family. In terms of assembly, composed of six subunits; NqrA, NqrB, NqrC, NqrD, NqrE and NqrF. FMN serves as cofactor.

It is found in the cell inner membrane. It catalyses the reaction a ubiquinone + n Na(+)(in) + NADH + H(+) = a ubiquinol + n Na(+)(out) + NAD(+). Its function is as follows. NQR complex catalyzes the reduction of ubiquinone-1 to ubiquinol by two successive reactions, coupled with the transport of Na(+) ions from the cytoplasm to the periplasm. NqrA to NqrE are probably involved in the second step, the conversion of ubisemiquinone to ubiquinol. This is Na(+)-translocating NADH-quinone reductase subunit B from Chlamydia abortus (strain DSM 27085 / S26/3) (Chlamydophila abortus).